Here is a 308-residue protein sequence, read N- to C-terminus: Glutaminase (308 aa).

Substrate-binding residues include S65, N116, E161, N168, Y192, Y244, and V262.

The protein belongs to the glutaminase family. As to quaternary structure, homotetramer.

It carries out the reaction L-glutamine + H2O = L-glutamate + NH4(+). This chain is Glutaminase, found in Geobacillus kaustophilus (strain HTA426).